The primary structure comprises 185 residues: Probable chorismate pyruvate-lyase (185 aa).

Substrate contacts are provided by arginine 75, leucine 113, and glutamate 170.

Belongs to the UbiC family.

It is found in the cytoplasm. It catalyses the reaction chorismate = 4-hydroxybenzoate + pyruvate. It functions in the pathway cofactor biosynthesis; ubiquinone biosynthesis. Removes the pyruvyl group from chorismate, with concomitant aromatization of the ring, to provide 4-hydroxybenzoate (4HB) for the ubiquinone pathway. The polypeptide is Probable chorismate pyruvate-lyase (Coxiella burnetii (strain RSA 493 / Nine Mile phase I)).